Here is a 107-residue protein sequence, read N- to C-terminus: Phosphoribosyl-ATP pyrophosphatase (107 aa).

The protein belongs to the PRA-PH family.

It is found in the cytoplasm. The enzyme catalyses 1-(5-phospho-beta-D-ribosyl)-ATP + H2O = 1-(5-phospho-beta-D-ribosyl)-5'-AMP + diphosphate + H(+). It participates in amino-acid biosynthesis; L-histidine biosynthesis; L-histidine from 5-phospho-alpha-D-ribose 1-diphosphate: step 2/9. This Bacillus cereus (strain ZK / E33L) protein is Phosphoribosyl-ATP pyrophosphatase.